We begin with the raw amino-acid sequence, 362 residues long: Cyclic di-GMP phosphodiesterase PdeL (362 aa).

Positions 18 to 83 constitute an HTH luxR-type domain; sequence HLSLPGSVSE…TFWRDIFFQY (66 aa). A DNA-binding region (H-T-H motif) is located at residues 42–61; that stretch reads VTEISQYRNRSAKTISHQKK. Residues 106–360 form the EAL domain; the sequence is HIVTPEAISL…KFISEWVMKA (255 aa). Glutamine 127 serves as a coordination point for substrate. Glutamate 141 is a Mg(2+) binding site. Substrate is bound by residues 144–145 and asparagine 200; that span reads VR. The Mg(2+) site is built by asparagine 200, glutamate 232, and aspartate 262. Substrate-binding positions include aspartate 262, lysine 286, 319 to 322, and tyrosine 341; that span reads EGVE.

As to quaternary structure, is in a fast thermodynamic monomer-homodimer equilibrium. Dimerization is required for PDE activity. Dimerization affinity is increased about 100-fold upon substrate binding. The cofactor is Mg(2+). Requires Mn(2+) as cofactor.

It carries out the reaction 3',3'-c-di-GMP + H2O = 5'-phosphoguanylyl(3'-&gt;5')guanosine + H(+). Strongly inhibited by Ca(2+). Its function is as follows. Acts both as an enzyme and as a c-di-GMP sensor to couple transcriptional activity to the c-di-GMP status of the cell. Phosphodiesterase (PDE) that catalyzes the hydrolysis of cyclic-di-GMP (c-di-GMP) to 5'-pGpG. Also acts as a transcription factor to control its own expression. This chain is Cyclic di-GMP phosphodiesterase PdeL, found in Escherichia coli (strain K12).